Here is a 474-residue protein sequence, read N- to C-terminus: 3-isopropylmalate dehydratase large subunit (474 aa).

The [4Fe-4S] cluster site is built by Cys-353, Cys-414, and Cys-417.

This sequence belongs to the aconitase/IPM isomerase family. LeuC type 1 subfamily. Heterodimer of LeuC and LeuD. The cofactor is [4Fe-4S] cluster.

The enzyme catalyses (2R,3S)-3-isopropylmalate = (2S)-2-isopropylmalate. Its pathway is amino-acid biosynthesis; L-leucine biosynthesis; L-leucine from 3-methyl-2-oxobutanoate: step 2/4. In terms of biological role, catalyzes the isomerization between 2-isopropylmalate and 3-isopropylmalate, via the formation of 2-isopropylmaleate. This chain is 3-isopropylmalate dehydratase large subunit, found in Teredinibacter turnerae (strain ATCC 39867 / T7901).